Here is a 135-residue protein sequence, read N- to C-terminus: RxLR effector protein Avr10 (135 aa).

The signal sequence occupies residues 1–19 (MRLSFIIFAISLLAGGSGA). Residues 34 to 43 (GTNQGASTGK) show a composition bias toward polar residues. The disordered stretch occupies residues 34–64 (GTNQGASTGKRSLRYDNNAERAGEEDDEERA). Positions 44–63 (RSLRYDNNAERAGEEDDEER) match the RxLR-dEER motif. Positions 46 to 55 (LRYDNNAERA) are enriched in basic and acidic residues.

The protein belongs to the RxLR effector family.

The protein resides in the secreted. It is found in the host nucleus. Its subcellular location is the host cytoplasm. In terms of biological role, secreted effector that acts as an elicitor of hypersensitive response (HR) specifically on plants carrying defense protein R10. Enhances P.infestans colonization of Nicotiana benthamiana leaves. The sequence is that of RxLR effector protein Avr10 from Phytophthora infestans (strain T30-4) (Potato late blight agent).